Reading from the N-terminus, the 32-residue chain is GFLDIINKLGKTFAGHMLDKIKCTIGTCPPSP.

Cysteine 23 and cysteine 28 are disulfide-bonded.

The protein belongs to the frog skin active peptide (FSAP) family. Ranatuerin subfamily. In terms of tissue distribution, expressed by the skin glands.

The protein resides in the secreted. Antibacterial activity against Gram-positive bacterium S.aureus (MIC=60 uM). Shows no detectable hemolytic activity towards human erythrocytes. In Aquarana catesbeiana (American bullfrog), this protein is Ranatuerin-3.